The following is a 341-amino-acid chain: Tetraacyldisaccharide 4'-kinase (341 aa).

Residue 57–64 (TVGGTGKT) coordinates ATP.

Belongs to the LpxK family.

The catalysed reaction is a lipid A disaccharide + ATP = a lipid IVA + ADP + H(+). The protein operates within glycolipid biosynthesis; lipid IV(A) biosynthesis; lipid IV(A) from (3R)-3-hydroxytetradecanoyl-[acyl-carrier-protein] and UDP-N-acetyl-alpha-D-glucosamine: step 6/6. Transfers the gamma-phosphate of ATP to the 4'-position of a tetraacyldisaccharide 1-phosphate intermediate (termed DS-1-P) to form tetraacyldisaccharide 1,4'-bis-phosphate (lipid IVA). This chain is Tetraacyldisaccharide 4'-kinase, found in Maricaulis maris (strain MCS10) (Caulobacter maris).